The chain runs to 628 residues: MKQLLCYLPWLLLLSLVVSPFNEARFVVEKNSLSVTSPESIKGTHDSAIGNFGIPQYGGSMAGTVVYPKENQKSCKEFSDFSISFKSQPGALPTFLLVDRGDCFFALKVWNAQKAGASAVLVADNVDEPLITMDTPEEDVSSAKYIENITIPSALVTKGFGEKLKKAISGGDMVNLNLDWREAVPHPDDRVEYELWTNSNDECGVKCDMLMEFVKDFKGAAQILEKGGFTQFRPHYITWYCPHAFTLSRQCKSQCINKGRYCAPDPEQDFSSGYDGKDVVVENLRQLCVYKVANETGKPWVWWDYVTDFQIRCPMKEKKYNKDCAESVIKSLGIDSRKIDKCMGDPDADLDNPVLKEEQDAQVGKGTRGDVTILPTLVVNNRQYRGKLEKSAVLKALCSGFEESTEPAICLSTDMETNECLDNNGGCWQDKSANITACKDTFRGKVCVCPIVDGVRFKGDGYSHCEPSGPGRCTINNGGCWHEERDGHAFSACVDKDSVKCECPPGFKGDGVKKCEDINECKEKKACQCPECSCKNTWGSYECSCSGDLLYMRDHDTCISKTGSQVKSAWAAVWLIMLSLGLAAAGAYLVYKYRLRQYMDSEIRAIMAQYMPLDSQPEVPNHTNDERA.

The N-terminal stretch at 1–24 is a signal peptide; it reads MKQLLCYLPWLLLLSLVVSPFNEA. At 25–569 the chain is on the lumenal side; sequence RFVVEKNSLS…SKTGSQVKSA (545 aa). A PA domain is found at 56–168; sequence QYGGSMAGTV…GFGEKLKKAI (113 aa). Residues Asn-148, Asn-294, and Asn-434 are each glycosylated (N-linked (GlcNAc...) asparagine). EGF-like domains are found at residues 416 to 466 and 469 to 516; these read ETNE…SHCE and GPGR…KKCE. 7 cysteine pairs are disulfide-bonded: Cys-420–Cys-438, Cys-427–Cys-447, Cys-449–Cys-465, Cys-473–Cys-493, Cys-480–Cys-501, Cys-503–Cys-515, and Cys-545–Cys-558. Residues 517-559 form the EGF-like 3; calcium-binding domain; the sequence is DINECKEKKACQCPECSCKNTWGSYECSCSGDLLYMRDHDTCI. A helical membrane pass occupies residues 570 to 590; that stretch reads WAAVWLIMLSLGLAAAGAYLV. Residues 591–628 are Cytoplasmic-facing; it reads YKYRLRQYMDSEIRAIMAQYMPLDSQPEVPNHTNDERA. The Tyrosine-based internalization motif signature appears at 610–613; it reads YMPL.

It belongs to the VSR (BP-80) family. Expressed at low levels in seeds, seedlings, roots, stems, leaves, flowers and siliques.

Its subcellular location is the membrane. It is found in the golgi apparatus membrane. The protein localises to the cytoplasmic vesicle. The protein resides in the clathrin-coated vesicle membrane. It localises to the prevacuolar compartment membrane. Its function is as follows. Vacuolar-sorting receptor (VSR) involved in clathrin-coated vesicles sorting from Golgi apparatus to vacuoles. In Arabidopsis thaliana (Mouse-ear cress), this protein is Vacuolar-sorting receptor 4 (VSR4).